Reading from the N-terminus, the 31-residue chain is Conotoxin pc6b (31 aa).

Cystine bridges form between cysteine 2-cysteine 20, cysteine 9-cysteine 25, and cysteine 19-cysteine 29.

It belongs to the conotoxin O1 superfamily. Expressed by the venom duct.

It localises to the secreted. In Conus pictus (Cone snail), this protein is Conotoxin pc6b.